A 28-amino-acid polypeptide reads, in one-letter code: Flagellar filament 34 kDa core protein (28 aa).

This sequence belongs to the bacterial flagellin family. As to quaternary structure, the flagellum consists of an outer layer composed of repeating units of FlaA around a core that contains several antigenically related polypeptides.

The protein resides in the periplasmic flagellum. The protein localises to the periplasm. In terms of biological role, component of the core of the flagella. This Treponema phagedenis protein is Flagellar filament 34 kDa core protein.